A 518-amino-acid chain; its full sequence is Putative transposase for insertion sequence IS408 (518 aa).

The region spanning 11-94 is the HTH IS408-type domain; sequence LKEVLRLKWA…PDYTALHREL (84 aa). Residues 23 to 44 constitute a DNA-binding region (H-T-H motif); that stretch reads LTHRQISRAIGISVGAVSKFAA. The region spanning 140–335 is the Integrase catalytic domain; that stretch reads QQHRAGEKLF…LPVRRYEIAT (196 aa). The interval 496-518 is disordered; sequence LPTTPAEWRSPEHENVRGPDYYH. Residues 504–518 show a composition bias toward basic and acidic residues; that stretch reads RSPEHENVRGPDYYH.

It belongs to the transposase IS21/IS408/IS1162 family.

Its function is as follows. Required for the transposition of the insertion element. This chain is Putative transposase for insertion sequence IS408, found in Burkholderia multivorans (strain ATCC 17616 / 249).